A 399-amino-acid polypeptide reads, in one-letter code: Imidazolonepropionase (399 aa).

Polar residues predominate over residues 1–13 (MSETLYTGISQLA). The segment at 1-20 (MSETLYTGISQLATPRPGPQ) is disordered. Fe(3+) is bound by residues H74 and H76. Zn(2+) contacts are provided by H74 and H76. Positions 83, 146, and 176 each coordinate 4-imidazolone-5-propanoate. Y146 is a binding site for N-formimidoyl-L-glutamate. Fe(3+) is bound at residue H238. Residue H238 participates in Zn(2+) binding. Q241 is a binding site for 4-imidazolone-5-propanoate. Position 312 (D312) interacts with Fe(3+). Position 312 (D312) interacts with Zn(2+). Residues N314 and G316 each contribute to the N-formimidoyl-L-glutamate site. S317 contributes to the 4-imidazolone-5-propanoate binding site.

It belongs to the metallo-dependent hydrolases superfamily. HutI family. It depends on Zn(2+) as a cofactor. The cofactor is Fe(3+).

It is found in the cytoplasm. It carries out the reaction 4-imidazolone-5-propanoate + H2O = N-formimidoyl-L-glutamate. The protein operates within amino-acid degradation; L-histidine degradation into L-glutamate; N-formimidoyl-L-glutamate from L-histidine: step 3/3. Catalyzes the hydrolytic cleavage of the carbon-nitrogen bond in imidazolone-5-propanoate to yield N-formimidoyl-L-glutamate. It is the third step in the universal histidine degradation pathway. The protein is Imidazolonepropionase of Deinococcus radiodurans (strain ATCC 13939 / DSM 20539 / JCM 16871 / CCUG 27074 / LMG 4051 / NBRC 15346 / NCIMB 9279 / VKM B-1422 / R1).